Consider the following 428-residue polypeptide: Divergent protein kinase domain 1A (428 aa).

Topologically, residues 1–27 are cytoplasmic; the sequence is MARSLCAGAWLRKPHYLQARLSYMRVK. Residues 28–48 traverse the membrane as a helical segment; the sequence is YLFFSWLVVFVGSWIIYVQYS. The Lumenal portion of the chain corresponds to 49–428; it reads TYTELCRGKD…WKKISYTNDS (380 aa).

This sequence belongs to the DIPK family. Post-translationally, among the many cysteines in the lumenal domain, most are probably involved in disulfide bonds. Ubiquitous.

It localises to the endoplasmic reticulum membrane. The protein is Divergent protein kinase domain 1A (Dipk1a) of Mus musculus (Mouse).